A 518-amino-acid chain; its full sequence is Probable lysine--tRNA ligase, cytoplasmic (518 aa).

It belongs to the class-II aminoacyl-tRNA synthetase family. In terms of assembly, homodimer.

It localises to the cytoplasm. It carries out the reaction tRNA(Lys) + L-lysine + ATP = L-lysyl-tRNA(Lys) + AMP + diphosphate. This is Probable lysine--tRNA ligase, cytoplasmic from Enterocytozoon bieneusi (strain H348) (Microsporidian parasite).